A 640-amino-acid polypeptide reads, in one-letter code: UvrABC system protein C (640 aa).

Residues N22–V101 enclose the GIY-YIG domain. The UVR domain maps to D211–L246.

It belongs to the UvrC family. In terms of assembly, interacts with UvrB in an incision complex.

Its subcellular location is the cytoplasm. In terms of biological role, the UvrABC repair system catalyzes the recognition and processing of DNA lesions. UvrC both incises the 5' and 3' sides of the lesion. The N-terminal half is responsible for the 3' incision and the C-terminal half is responsible for the 5' incision. The sequence is that of UvrABC system protein C from Prochlorococcus marinus (strain NATL2A).